Here is a 322-residue protein sequence, read N- to C-terminus: Olfactory receptor 11L1 (322 aa).

The Extracellular segment spans residues 1 to 25 (MEPQNTSTVTNFQLLGFQNLLEWQA). Asparagine 5 carries an N-linked (GlcNAc...) asparagine glycan. A helical transmembrane segment spans residues 26–46 (LLFVIFLLIYCLTIIGNVVII). Residues 47–54 (TVVSQGLR) are Cytoplasmic-facing. The helical transmembrane segment at 55-75 (LHSPMYMFLQHLSFLEVWYTS) threads the bilayer. Residues 76–99 (TTVPLLLANLLSWGQAISFSACMA) lie on the Extracellular side of the membrane. Cysteine 97 and cysteine 189 form a disulfide bridge. A helical membrane pass occupies residues 100-120 (QLYFFVFLGATECFLLAFMAY). At 121 to 139 (DRYLAICSPLRYPFLMHRG) the chain is on the cytoplasmic side. Residues 140–160 (LCARLVVVSWCTGVSTGFLPS) traverse the membrane as a helical segment. Residues 161–197 (LMISRLDFCGRNQINHFFCDLPPLMQLSCSRVYITEV) lie on the Extracellular side of the membrane. The helical transmembrane segment at 198-217 (TIFILSIAVLCICFFLTLGP) threads the bilayer. Topologically, residues 218–237 (YVFIVSSILRIPSTSGRRKT) are cytoplasmic. The chain crosses the membrane as a helical span at residues 238-258 (FSTCGSHLAVVTLYYGTMISM). The Extracellular segment spans residues 259 to 271 (YVCPSPHLLPEIN). A helical transmembrane segment spans residues 272-292 (KIISVFYTVVTPLLNPVIYSL). At 293–322 (RNKDFKEAVRKVMRRKCGILWSTSKRKFLY) the chain is on the cytoplasmic side.

The protein belongs to the G-protein coupled receptor 1 family.

Its subcellular location is the cell membrane. Odorant receptor. The chain is Olfactory receptor 11L1 (OR11L1) from Homo sapiens (Human).